We begin with the raw amino-acid sequence, 525 residues long: Glucans biosynthesis protein G (525 aa).

A signal peptide spans 1–35; it reads MIFRSVSNTDFRARVRTLLLAGSTALAFVAAPVWA.

The protein belongs to the OpgD/OpgG family.

Its subcellular location is the periplasm. Its pathway is glycan metabolism; osmoregulated periplasmic glucan (OPG) biosynthesis. In terms of biological role, involved in the biosynthesis of osmoregulated periplasmic glucans (OPGs). This Pseudomonas paraeruginosa (strain DSM 24068 / PA7) (Pseudomonas aeruginosa (strain PA7)) protein is Glucans biosynthesis protein G.